Reading from the N-terminus, the 256-residue chain is Rhamnolipids biosynthesis 3-oxoacyl-[acyl-carrier-protein] reductase (256 aa).

14-38 contributes to the NADP(+) binding site; it reads VTGGSRGIGQMIAQGLLEAGARVFI. Ser-148 serves as a coordination point for substrate. The Proton acceptor role is filled by Tyr-162.

The protein belongs to the short-chain dehydrogenases/reductases (SDR) family.

The catalysed reaction is a (3R)-hydroxyacyl-[ACP] + NADP(+) = a 3-oxoacyl-[ACP] + NADPH + H(+). The protein operates within lipid metabolism; rhamnolipid biosynthesis. Its function is as follows. Required for the synthesis of the beta-hydroxy acid moiety of rhamnolipids. This is Rhamnolipids biosynthesis 3-oxoacyl-[acyl-carrier-protein] reductase (rhlG) from Pseudomonas aeruginosa (strain ATCC 15692 / DSM 22644 / CIP 104116 / JCM 14847 / LMG 12228 / 1C / PRS 101 / PAO1).